A 757-amino-acid polypeptide reads, in one-letter code: Neutral ceramidase 2 (757 aa).

A signal peptide spans 1-25 (MAVSLPLFQFILFLLLLLLSRTVYA). Asn311 carries an N-linked (GlcNAc...) asparagine glycan. The active-site Nucleophile is the Ser330. 2 N-linked (GlcNAc...) asparagine glycosylation sites follow: Asn348 and Asn657.

This sequence belongs to the neutral ceramidase family.

It localises to the secreted. Its subcellular location is the endoplasmic reticulum. It is found in the golgi apparatus. It catalyses the reaction an N-acylsphing-4-enine + H2O = sphing-4-enine + a fatty acid. Functionally, hydrolyzes the sphingolipid ceramide into sphingosine and free fatty acid. The protein is Neutral ceramidase 2 of Arabidopsis thaliana (Mouse-ear cress).